A 474-amino-acid polypeptide reads, in one-letter code: Crocetin glucosyltransferase, chloroplastic (474 aa).

The N-terminal 45 residues, 1–45 (MVQQRHVLLITYPAQGHINPALQFAQRLLRMGIQVTLATSVYALS), are a transit peptide targeting the chloroplast. Residue His17 is the Proton acceptor of the active site. Position 17 (His17) interacts with an anthocyanidin. UDP-alpha-D-glucose contacts are provided by Gln346, His361, Trp364, Asn365, Ser366, Glu369, Asp385, and Gln386.

The protein belongs to the UDP-glycosyltransferase family. In terms of tissue distribution, ubiquitous.

It localises to the plastid. It is found in the chloroplast. It carries out the reaction crocetin + UDP-alpha-D-glucose = beta-D-glucosyl crocetin + UDP. The enzyme catalyses beta-D-glucosyl crocetin + UDP-alpha-D-glucose = bis(beta-D-glucosyl) crocetin + UDP. The catalysed reaction is beta-D-gentiobiosyl crocetin + UDP-alpha-D-glucose = beta-D-gentiobiosyl beta-D-glucosyl crocetin + UDP. Functionally, glucosyltransferase acting on a broad range of substrates, including crocetin, 4-coumaric acid, caffeic acid and ferulic acid. No activity with indol-3-acetic acid, bixin and norbixin, and no formation of O-glucosides. Involved with UGT94E5 in sequential glycosylation of crocetin to crocin (bis(beta-D-gentiobiosyl) crocetin). The chain is Crocetin glucosyltransferase, chloroplastic (UGT75L6) from Gardenia jasminoides (Cape jasmine).